A 573-amino-acid polypeptide reads, in one-letter code: NADP-dependent malic enzyme, chloroplastic (573 aa).

Y123 acts as the Proton donor in catalysis. R176 serves as a coordination point for NAD(+). K194 serves as the catalytic Proton acceptor. Residues E265, D266, and D289 each coordinate a divalent metal cation. Residue D289 participates in NAD(+) binding. An NADP(+)-binding site is contributed by 318–334 (LFLGAGEAGTGIAELIA). Residue N430 coordinates NAD(+).

Belongs to the malic enzymes family. In terms of assembly, homotetramer. It depends on Mg(2+) as a cofactor. Requires Mn(2+) as cofactor.

It localises to the plastid. The protein localises to the chloroplast. It catalyses the reaction (S)-malate + NADP(+) = pyruvate + CO2 + NADPH. The enzyme catalyses oxaloacetate + H(+) = pyruvate + CO2. It participates in photosynthesis; C4 acid pathway. Its function is as follows. The chloroplastic ME isoform decarboxylates malate shuttled from neighboring mesophyll cells. The CO(2) released is then refixed by ribulose-bisphosphate carboxylase. This pathway eliminates the photorespiratory loss of CO(2) that occurs in most plants. In Solanum lycopersicum (Tomato), this protein is NADP-dependent malic enzyme, chloroplastic.